The chain runs to 577 residues: Scoloptoxin SSD14 (577 aa).

The N-terminal stretch at 1–25 (MGTSYRKLGYVLFLMLGMIVEEGIA) is a signal peptide.

In terms of assembly, heterodimer composed of subunits alpha and beta; probably disulfide-linked. As to expression, expressed by the venom gland.

It localises to the secreted. Functionally, dose-dependently induces human platelet aggregation on both plasma rich platelet and washed platelet (max. response at 3.2 ug/mL) and causes hemolysis against mouse and rabbit erythrocytes (35 and 65% respectively at 5 ug/mL). Does not show hemolytic activity against human erythrocytes (even at 100 ug/mL). The chain is Scoloptoxin SSD14 from Scolopendra dehaani (Thai centipede).